The chain runs to 362 residues: Snurportin-1 (362 aa).

Position 1 is an N-acetylmethionine (methionine 1). Disordered stretches follow at residues 1 to 40 and 69 to 90; these read MEEL…SLEQ and DWTG…MDVD. Residues 1 to 65 form a necessary for interaction with KPNB1 and m3G-cap U1 and U5 snRNP import receptor activity region; that stretch reads MEELSQALAG…LDYVNHARRL (65 aa). The segment at 1–160 is necessary for interaction with XPO1; it reads MEELSQALAG…NTFPSLLPGG (160 aa). The 63-residue stretch at 11–73 folds into the IBB domain; the sequence is SFSVSQDLNS…RLAEDDWTGM (63 aa). A compositionally biased stretch (polar residues) spans 12-22; it reads FSVSQDLNSTA. Residues 69–89 show a composition bias toward acidic residues; the sequence is DWTGMESEEEEEKKDDEEMDV. Serine 75 carries the phosphoserine modification. The segment at 128 to 130 is interaction with m3G-cap structure; it reads GKR. Positions 210 to 330 are necessary for binding to the m3G-cap structure; the sequence is LHSKLPEEEG…GIMGKLTPRA (121 aa). Positions 319-362 are disordered; sequence KEGIMGKLTPRASENGHYELEHLSTPKLKSPPQRPNHPESLMEN. Over residues 332-342 the composition is skewed to basic and acidic residues; the sequence is ENGHYELEHLS.

Belongs to the snurportin family. As to quaternary structure, component of an import snRNP complex composed of KPNB1, SNUPN, SMN1 and ZNF259. Component of a nuclear export receptor complex composed of KPNB1, Ran, SNUPN and XPO1. Found in a trimeric export complex with SNUPN, Ran and XPO1. Interacts (via IBB domain) with KPNB1; the interaction is direct. Interacts with DDX20, IPO7, SMN1, SNRPB and XPO1. Interacts directly with XPO1. Its interaction with XPO1 and binding to m3G-cap U snRNPs appears to be mutually exclusive. Can form homomers.

It is found in the nucleus. The protein resides in the cytoplasm. In terms of biological role, functions as an U snRNP-specific nuclear import adapter. Involved in the trimethylguanosine (m3G)-cap-dependent nuclear import of U snRNPs. Binds specifically to the terminal m3G-cap U snRNAs. This chain is Snurportin-1 (SNUPN), found in Bos taurus (Bovine).